A 1450-amino-acid chain; its full sequence is Collagen alpha-1(I) chain (1450 aa).

Positions 1–22 (MFSFVDNRLLVLLAACVLLVRA) are cleaved as a signal peptide. A propeptide spans 23–148 (LDQEDIESGL…PPGLGGNFAP (126 aa)) (N-terminal propeptide). The 60-residue stretch at 31–90 (GLCHQEGTTYSDKDVWKPEPCVICVCDNGNIMCDDVTCGDYPVDCPNAEIPFGECCPVCP) folds into the VWFC domain. The disordered stretch occupies residues 97–1201 (YSEQTGVEGP…EPKSHGDGRY (1105 aa)). A compositionally biased stretch (basic and acidic residues) spans 106 to 116 (PKGEVGPKGDR). Residues 130 to 140 (LPGPPGPPGPP) show a composition bias toward pro residues. A Pyrrolidone carboxylic acid modification is found at Gln149. The residue at position 157 (Lys157) is an Allysine. Pro residues predominate over residues 166–181 (PMGPMGPRGPPGPSGS). 8 positions are modified to 4-hydroxyproline: Pro176, Pro182, Pro194, Pro197, Pro212, Pro227, Pro242, and Pro248. Over residues 182–206 (PGPQGFQGPSGEPGEPGAAGALGPR) the composition is skewed to low complexity. The span at 215 to 229 (NGDDGESGKPGRPGE) shows a compositional bias: basic and acidic residues. Lys251 is subject to 5-hydroxylysine; alternate. Lys251 carries an O-linked (Gal...) hydroxylysine; alternate glycan. Residues 266 to 292 (NGPAGPKGEPGNPGENGAPGQAGPRGL) are compositionally biased toward low complexity. 17 positions are modified to 4-hydroxyproline: Pro275, Pro278, Pro284, Pro293, Pro299, Pro314, Pro320, Pro329, Pro332, Pro359, Pro362, Pro374, Pro380, Pro389, Pro395, Pro398, and Pro413. A compositionally biased stretch (pro residues) spans 317–331 (AGPPGPTGPTGPPGF). Residues 352-374 (PQGARGEPGAPGPAGAAGPSGNP) show a composition bias toward low complexity. The segment covering 378–387 (GQPGGKGATG) has biased composition (gly residues). Residues 388 to 443 (SPGIAGAPGFPGARGAPGPQGPAGAPGPKGNNGEPGAQGNKGEPGAKGEPGPAGVQ) are compositionally biased toward low complexity. Lys416 is subject to 5-hydroxylysine. A 4-hydroxyproline mark is found at Pro422, Pro437, Pro446, Pro461, Pro467, Pro476, and Pro482. Positions 471–480 (GERGGPGSRG) are enriched in gly residues. 5-hydroxylysine is present on Lys491. 16 positions are modified to 4-hydroxyproline: Pro494, Pro515, Pro521, Pro530, Pro533, Pro551, Pro569, Pro578, Pro590, Pro608, Pro626, Pro632, Pro644, Pro650, Pro656, and Pro668. 2 stretches are compositionally biased toward low complexity: residues 568–578 (FPGPKGAAGEP) and 586–596 (VAGPPGATGAP). Residues 637–650 (PAGEAGKPGEQGAP) are compositionally biased toward low complexity. Over residues 669 to 678 (GERGGQGPAG) the composition is skewed to gly residues. Positions 679-701 (AQGPRGSPGSPGNDGAKGEAGAA) are enriched in low complexity. A 4-hydroxyproline mark is found at Pro689, Pro704, Pro710, Pro716, and Pro725. Residues 702-711 (GAPGGRGPPG) are compositionally biased toward gly residues. The residue at position 737 (Lys737) is a 5-hydroxylysine. Pro743, Pro758, Pro764, Pro785, Pro791, Pro794, Pro803, Pro809, Pro827, Pro836, and Pro845 each carry 4-hydroxyproline. Residues 796–806 (PAGICGPPGAD) are compositionally biased toward low complexity. The segment covering 817–869 (DAGPKGDAGAPGPAGPTGAPGPAGNVGAPGPKGTRGAAGPPGATGFPGAAGRL) has biased composition (low complexity). Lys848 is subject to 5-hydroxylysine. 2 positions are modified to 4-hydroxyproline: Pro857 and Pro863. Pro871 is modified (3-hydroxyproline). 4-hydroxyproline occurs at positions 872, 881, 884, 908, 914, 923, 932, 950, 962, 968, 983, 989, 995, 1004, and 1010. Low complexity predominate over residues 917 to 943 (SGEKGSPGSDGPAGAPGIPGPQGIAGQ). The span at 982–997 (PPGPSGPPGLGGPPGE) shows a compositional bias: pro residues. Lys1019 bears the 5-hydroxylysine mark. A compositionally biased stretch (pro residues) spans 1028 to 1043 (SGPPGAPGAPGAPGPV). A 4-hydroxyproline mark is found at Pro1031, Pro1034, and Pro1037. Residues 1064–1078 (AGPSGVRGAPGPAGA) are compositionally biased toward low complexity. Basic and acidic residues predominate over residues 1079–1093 (RGDKGEAGEQGERGM). Lys1082 is subject to 5-hydroxylysine. Residue Lys1094 is modified to 5-hydroxylysine; alternate. A glycan (O-linked (Gal...) hydroxylysine; alternate) is linked at Lys1094. A 4-hydroxyproline mark is found at Pro1106 and Pro1109. The span at 1120–1129 (PSGPAGPRGP) shows a compositional bias: pro residues. 2 positions are modified to 4-hydroxyproline: Pro1130 and Pro1145. The span at 1130 to 1145 (PGSSGSTGKDGVNGLP) shows a compositional bias: low complexity. Position 1150 is a 3-hydroxyproline (Pro1150). Residue Pro1151 is modified to 4-hydroxyproline. Over residues 1163–1178 (AGPPGPPGPPGPPGPP) the composition is skewed to pro residues. Position 1165 is a 3-hydroxyproline (Pro1165). Residue Pro1166 is modified to 4-hydroxyproline. Pro1168 is modified (3-hydroxyproline). The residue at position 1169 (Pro1169) is a 4-hydroxyproline. Residue Pro1171 is modified to 3-hydroxyproline. Pro1172, Pro1175, and Pro1178 each carry 4-hydroxyproline. At Lys1194 the chain carries Allysine. Residues 1205-1450 (DDANVVRDRD…GIDIGPVCFL (246 aa)) constitute a propeptide, C-terminal propeptide. The Fibrillar collagen NC1 domain maps to 1215–1450 (LEVDTTLKSL…GIDIGPVCFL (236 aa)). 3 cysteine pairs are disulfide-bonded: Cys1245-Cys1277, Cys1285-Cys1448, and Cys1356-Cys1401. Residues Asp1263, Asn1265, Gln1266, Cys1268, and Asp1271 each coordinate Ca(2+). N-linked (GlcNAc...) asparagine glycosylation occurs at Asn1351.

This sequence belongs to the fibrillar collagen family. Trimers of one alpha 2(I) and two alpha 1(I) chains. In terms of processing, contains mostly 4-hydroxyproline. Proline residues at the third position of the tripeptide repeating unit (G-X-Y) are hydroxylated in some or all of the chains. Post-translationally, contains 3-hydroxyproline at a few sites. This modification occurs on the first proline residue in the sequence motif Gly-Pro-Hyp, where Hyp is 4-hydroxyproline. Lysine residues at the third position of the tripeptide repeating unit (G-X-Y) are 5-hydroxylated in some or all of the chains. In terms of processing, O-glycosylated on hydroxylated lysine residues. The O-linked glycan consists of a Glc-Gal disaccharide.

It localises to the secreted. The protein localises to the extracellular space. The protein resides in the extracellular matrix. Functionally, type I collagen is a member of group I collagen (fibrillar forming collagen). This Cynops pyrrhogaster (Japanese fire-bellied newt) protein is Collagen alpha-1(I) chain (COL1A1).